Here is a 73-residue protein sequence, read N- to C-terminus: Large ribosomal subunit protein bL31 (73 aa).

Zn(2+)-binding residues include Cys16, Cys18, Cys37, and Cys40.

This sequence belongs to the bacterial ribosomal protein bL31 family. Type A subfamily. As to quaternary structure, part of the 50S ribosomal subunit. Requires Zn(2+) as cofactor.

Binds the 23S rRNA. This chain is Large ribosomal subunit protein bL31, found in Hamiltonella defensa subsp. Acyrthosiphon pisum (strain 5AT).